We begin with the raw amino-acid sequence, 327 residues long: Malate dehydrogenase (327 aa).

11–17 (GAAGQIA) is an NAD(+) binding site. Residues Arg-92 and Arg-98 each contribute to the substrate site. NAD(+) contacts are provided by residues Asn-105, Gln-112, and 129–131 (VGN). Substrate is bound by residues Asn-131 and Arg-162. His-187 serves as the catalytic Proton acceptor.

Belongs to the LDH/MDH superfamily. MDH type 2 family.

The enzyme catalyses (S)-malate + NAD(+) = oxaloacetate + NADH + H(+). Catalyzes the reversible oxidation of malate to oxaloacetate. This Nitrosospira multiformis (strain ATCC 25196 / NCIMB 11849 / C 71) protein is Malate dehydrogenase.